Reading from the N-terminus, the 932-residue chain is Protocadherin gamma-A7 (932 aa).

The signal sequence occupies residues 1–28 (MAAQPRGGDCRGFVLLSILLGTPWEAWA). Cadherin domains lie at 29–133 (GRIL…VPRF), 134–242 (LTEE…TPVF), 243–347 (SLPQ…APEV), 348–452 (TMTS…PPTF), 453–562 (PHSS…PPEI), and 570–682 (DGST…EPSD). Over 29-692 (GRILYSVSEE…GPYNYDLTLY (664 aa)) the chain is Extracellular. 2 N-linked (GlcNAc...) asparagine glycosylation sites follow: N419 and N545. A helical transmembrane segment spans residues 693-713 (LVVAVAAVSCVFLAFVLVLLA). The Cytoplasmic portion of the chain corresponds to 714-932 (LRLRRWHKSR…KKKSGKKEKK (219 aa)). Disordered regions lie at residues 804 to 841 (VPSI…WPNN) and 902 to 932 (ATLT…KEKK). Polar residues predominate over residues 806–841 (SIQQAPPNTDWRFSQAQRPGTSGSQNGDDTGTWPNN). Positions 922-932 (NKKKSGKKEKK) are enriched in basic residues.

It is found in the cell membrane. Functionally, potential calcium-dependent cell-adhesion protein. May be involved in the establishment and maintenance of specific neuronal connections in the brain. The polypeptide is Protocadherin gamma-A7 (PCDHGA7) (Pan troglodytes (Chimpanzee)).